A 632-amino-acid polypeptide reads, in one-letter code: Bestrophin homolog 24 (632 aa).

4 helical membrane passes run 28 to 48, 83 to 103, 234 to 254, and 271 to 291; these read IWKA…ILSV, GFFV…IGFI, IMYP…CLLA, and LYFP…MKVA. 2 disordered regions span residues 491–516 and 562–632; these read LSNK…EHPF and ETEV…TKFE. Positions 563–602 are enriched in basic and acidic residues; the sequence is TEVKRDEKKKKEEELREEGDNGKEEKDNKEDKKEEQDRPS. The segment covering 623-632 has biased composition (basic residues); that stretch reads PHLRPPTKFE.

Belongs to the anion channel-forming bestrophin (TC 1.A.46) family. Calcium-sensitive chloride channel subfamily. In terms of assembly, forms oligomers.

It is found in the cell membrane. In terms of biological role, forms chloride channels. The protein is Bestrophin homolog 24 (best-24) of Caenorhabditis elegans.